A 312-amino-acid chain; its full sequence is Olfactory receptor OR51C1 (312 aa).

Residues 1 to 26 (MGSNITSTSIIFLLTGVPGLEAFHTW) are Extracellular-facing. The chain crosses the membrane as a helical span at residues 27–47 (ISIPFCFLSVTALLGNSLILF). The Cytoplasmic portion of the chain corresponds to 48–66 (ATITQPSLHEPMYYFLSML). A helical transmembrane segment spans residues 67-87 (SATDLGLSISTLVTMLSIFWF). The Extracellular segment spans residues 88 to 99 (NVREISFNACLS). Residues Cys97 and Cys179 are joined by a disulfide bond. Residues 100–120 (HMFFIKFFTVMESSVLLAMAF) traverse the membrane as a helical segment. The Cytoplasmic portion of the chain corresponds to 121-143 (DRFVAVSNPLRYAMILTDSRIAQ). Residues 144-164 (IGVASVIRGLLMLTPMVALLI) form a helical membrane-spanning segment. At 165–201 (RLSYCHSQVLHHSYCYHPDVMKLSCTDTRINSAVGLT) the chain is on the extracellular side. The chain crosses the membrane as a helical span at residues 202 to 222 (AMFSTVGVDLLLILLSYVLII). Residues 223–240 (RTVLSVASPEERKETFST) lie on the Cytoplasmic side of the membrane. The chain crosses the membrane as a helical span at residues 241–261 (CVSHIVAFAIYYIPLISLSIV). The Extracellular segment spans residues 262-273 (HRFGKQAPAYVH). A helical transmembrane segment spans residues 274–294 (TMIANTYLLISPLMNPVIYSV). Residues 295–312 (KTKQIRRAVIKILHSKET) lie on the Cytoplasmic side of the membrane.

The protein belongs to the G-protein coupled receptor 1 family.

It is found in the membrane. Its function is as follows. Odorant receptor. In Homo sapiens (Human), this protein is Olfactory receptor OR51C1.